A 301-amino-acid chain; its full sequence is 4-hydroxy-tetrahydrodipicolinate synthase (301 aa).

Thr46 is a pyruvate binding site. Catalysis depends on Tyr135, which acts as the Proton donor/acceptor. The Schiff-base intermediate with substrate role is filled by Lys163. Ile205 contributes to the pyruvate binding site.

It belongs to the DapA family. Homotetramer; dimer of dimers.

Its subcellular location is the cytoplasm. The enzyme catalyses L-aspartate 4-semialdehyde + pyruvate = (2S,4S)-4-hydroxy-2,3,4,5-tetrahydrodipicolinate + H2O + H(+). It functions in the pathway amino-acid biosynthesis; L-lysine biosynthesis via DAP pathway; (S)-tetrahydrodipicolinate from L-aspartate: step 3/4. In terms of biological role, catalyzes the condensation of (S)-aspartate-beta-semialdehyde [(S)-ASA] and pyruvate to 4-hydroxy-tetrahydrodipicolinate (HTPA). This Lacticaseibacillus casei (strain BL23) (Lactobacillus casei) protein is 4-hydroxy-tetrahydrodipicolinate synthase.